The sequence spans 206 residues: Urease accessory protein UreG (206 aa).

Position 12-19 (12-19 (GPVGSGKT)) interacts with GTP.

The protein belongs to the SIMIBI class G3E GTPase family. UreG subfamily. In terms of assembly, homodimer. UreD, UreF and UreG form a complex that acts as a GTP-hydrolysis-dependent molecular chaperone, activating the urease apoprotein by helping to assemble the nickel containing metallocenter of UreC. The UreE protein probably delivers the nickel.

The protein localises to the cytoplasm. Its function is as follows. Facilitates the functional incorporation of the urease nickel metallocenter. This process requires GTP hydrolysis, probably effectuated by UreG. The sequence is that of Urease accessory protein UreG from Synechocystis sp. (strain ATCC 27184 / PCC 6803 / Kazusa).